Reading from the N-terminus, the 236-residue chain is THO complex subunit 7B (236 aa).

Residues 99 to 228 adopt a coiled-coil conformation; that stretch reads EANLREKESF…IRSASEDQRN (130 aa).

It belongs to the THOC7 family. Component of the THO complex, which is composed of THO1, THO2, THO3, THO5, THO6 and THO7.

It is found in the nucleus. Acts as a component of the THO subcomplex of the TREX complex which is thought to couple mRNA transcription, processing and nuclear export. The protein is THO complex subunit 7B (THO7B) of Arabidopsis thaliana (Mouse-ear cress).